The following is a 226-amino-acid chain: Leucyl/phenylalanyl-tRNA--protein transferase (226 aa).

This sequence belongs to the L/F-transferase family.

It is found in the cytoplasm. The catalysed reaction is N-terminal L-lysyl-[protein] + L-leucyl-tRNA(Leu) = N-terminal L-leucyl-L-lysyl-[protein] + tRNA(Leu) + H(+). It carries out the reaction N-terminal L-arginyl-[protein] + L-leucyl-tRNA(Leu) = N-terminal L-leucyl-L-arginyl-[protein] + tRNA(Leu) + H(+). It catalyses the reaction L-phenylalanyl-tRNA(Phe) + an N-terminal L-alpha-aminoacyl-[protein] = an N-terminal L-phenylalanyl-L-alpha-aminoacyl-[protein] + tRNA(Phe). In terms of biological role, functions in the N-end rule pathway of protein degradation where it conjugates Leu, Phe and, less efficiently, Met from aminoacyl-tRNAs to the N-termini of proteins containing an N-terminal arginine or lysine. The protein is Leucyl/phenylalanyl-tRNA--protein transferase of Pseudomonas putida (strain ATCC 47054 / DSM 6125 / CFBP 8728 / NCIMB 11950 / KT2440).